Consider the following 1710-residue polypeptide: Protein NETWORKED 1B (1710 aa).

Residues 13–92 enclose the NAB domain; the sequence is YSWWWDSHIP…ERYDHTTVEL (80 aa). Positions 113 to 159 are disordered; the sequence is EDSASSSSEPRTEADTEALQKDGTKSKRSFSQMNKLDGTSDSHEADS. 2 stretches are compositionally biased toward basic and acidic residues: residues 122–137 and 150–159; these read PRTEADTEALQKDGTK and GTSDSHEADS. 6 coiled-coil regions span residues 152-446, 474-546, 579-883, 974-1021, 1095-1259, and 1285-1336; these read SDSH…ELGA, QMLR…EIHC, VKKL…IDSL, HQCG…FESL, VSSL…LQEK, and LILE…LSAY. The disordered stretch occupies residues 1409–1448; the sequence is RLSRQITRSTSQKRRDRRKIENIQPDDQVTGESRQPRLRP. Residues 1559 to 1665 are a coiled coil; that stretch reads RRLSSLRISL…VLKLEDGTKS (107 aa).

The protein belongs to the NET family. Expressed in root meristems and at very low levels throughout mature vasculature.

Plant-specific actin binding protein. May be part of a membrane-cytoskeletal adapter complex. This Arabidopsis thaliana (Mouse-ear cress) protein is Protein NETWORKED 1B.